Consider the following 425-residue polypeptide: Cysteate synthase (425 aa).

Lys-106 is modified (N6-(pyridoxal phosphate)lysine). Pyridoxal 5'-phosphate contacts are provided by Asn-132 and Thr-382.

It belongs to the threonine synthase family. Cysteate synthase subfamily. Homotrimer. Pyridoxal 5'-phosphate serves as cofactor.

The enzyme catalyses O-phospho-L-serine + sulfite + H(+) = L-cysteate + phosphate. It participates in cofactor biosynthesis; coenzyme M biosynthesis. Its function is as follows. Specifically catalyzes the beta-elimination of phosphate from L-phosphoserine and the beta-addition of sulfite to the dehydroalanine intermediate to produce L-cysteate. In Methanosphaerula palustris (strain ATCC BAA-1556 / DSM 19958 / E1-9c), this protein is Cysteate synthase.